Here is a 315-residue protein sequence, read N- to C-terminus: Neuroguidin (315 aa).

At Ala-2 the chain carries N-acetylalanine. Positions 7–41 form a coiled coil; it reads LESDVSSSITLLKNLQEQVMAVTAQIQALTTKVRA. Residues 41–174 are necessary for interaction with EIF4E; sequence AGTYSTEKGL…KGSAKKYVPP (134 aa). Residues Ser-121, Ser-142, and Ser-143 each carry the phosphoserine modification. The interval 123-190 is disordered; it reads SENDPLRFKP…YDETEAEREQ (68 aa). The segment covering 144 to 155 has biased composition (acidic residues); it reads EDEEESEAEEGQ. The span at 180–190 shows a compositional bias: basic and acidic residues; that stretch reads HYDETEAEREQ. The stretch at 181 to 203 forms a coiled coil; sequence YDETEAEREQKRLEKAKRRALSS. Phosphoserine is present on residues Ser-204 and Ser-214. Composition is skewed to basic and acidic residues over residues 212–225 and 232–241; these read QYSDAPEEIRDARH and SQEDQHRVNY. Disordered stretches follow at residues 212-243 and 284-315; these read QYSDAPEEIRDARHPHVTRQSQEDQHRVNYEE and GTAHLDEDQNPVKKRKKLPKKGRKKKGFRRRW. A compositionally biased stretch (basic residues) spans 295 to 315; that stretch reads VKKRKKLPKKGRKKKGFRRRW.

This sequence belongs to the SAS10 family. Interacts with CPEB1 and EIF4E. In terms of tissue distribution, expressed in testis, ovary, spleen, kidney, hippocampus and cerebellum (at protein level). Expressed in testis, ovary, spleen, kidney, brain.

Its subcellular location is the nucleus. It localises to the nucleolus. The protein localises to the chromosome. It is found in the centromere. The protein resides in the cytoplasm. Its subcellular location is the cell projection. It localises to the axon. The protein localises to the dendrite. It is found in the filopodium. Its function is as follows. Part of the small subunit (SSU) processome, first precursor of the small eukaryotic ribosomal subunit. During the assembly of the SSU processome in the nucleolus, many ribosome biogenesis factors, an RNA chaperone and ribosomal proteins associate with the nascent pre-rRNA and work in concert to generate RNA folding, modifications, rearrangements and cleavage as well as targeted degradation of pre-ribosomal RNA by the RNA exosome. Its dissociation from the complex determines the transition from state pre-A1 to state pre-A1*. Inhibits mRNA translation in a cytoplasmic polyadenylation element (CPE)-dependent manner. The protein is Neuroguidin (Ngdn) of Mus musculus (Mouse).